The sequence spans 353 residues: NADH-quinone oxidoreductase subunit H (353 aa).

9 consecutive transmembrane segments (helical) span residues 8–28 (LLVY…IFIW), 75–95 (GVFW…FAAI), 108–128 (IGIL…FMAG), 148–168 (VSYE…TGSL), 179–199 (VPFI…AMAE), 229–249 (LFYL…TTLF), 258–278 (LHPV…IIWV), 297–317 (FLLP…LIAP), and 319–339 (INTA…VLLF).

The protein belongs to the complex I subunit 1 family. NDH-1 is composed of 14 different subunits. Subunits NuoA, H, J, K, L, M, N constitute the membrane sector of the complex.

It is found in the cell membrane. The catalysed reaction is a quinone + NADH + 5 H(+)(in) = a quinol + NAD(+) + 4 H(+)(out). In terms of biological role, NDH-1 shuttles electrons from NADH, via FMN and iron-sulfur (Fe-S) centers, to quinones in the respiratory chain. The immediate electron acceptor for the enzyme in this species is believed to be ubiquinone. Couples the redox reaction to proton translocation (for every two electrons transferred, four hydrogen ions are translocated across the cytoplasmic membrane), and thus conserves the redox energy in a proton gradient. This subunit may bind ubiquinone. In Dehalococcoides mccartyi (strain CBDB1), this protein is NADH-quinone oxidoreductase subunit H.